The sequence spans 99 residues: DNA-binding protein HmvA (99 aa).

The interaction with DNA stretch occupies residues 52 to 55; the sequence is KTIK.

It belongs to the archaeal histone HMF family. In terms of assembly, homodimer or heterodimer with another histone. Dimers then assemble into higher oligomers, with the DNA wrapped around the protein core.

It localises to the cytoplasm. The protein resides in the chromosome. Binds and compact DNA (95 to 150 base pairs) to form nucleosome-like structures that contain positive DNA supercoils. Increases the resistance of DNA to thermal denaturation (in vitro). The chain is DNA-binding protein HmvA (hmvA) from Methanococcus voltae.